Consider the following 679-residue polypeptide: Glycine--tRNA ligase beta subunit (679 aa).

The protein belongs to the class-II aminoacyl-tRNA synthetase family. As to quaternary structure, tetramer of two alpha and two beta subunits.

It localises to the cytoplasm. The enzyme catalyses tRNA(Gly) + glycine + ATP = glycyl-tRNA(Gly) + AMP + diphosphate. The chain is Glycine--tRNA ligase beta subunit (glyS) from Bacillus subtilis (strain 168).